Here is a 177-residue protein sequence, read N- to C-terminus: Large ribosomal subunit protein uL5 (177 aa).

The protein belongs to the universal ribosomal protein uL5 family. Part of the 50S ribosomal subunit; part of the 5S rRNA/L5/L18/L25 subcomplex. Contacts the 5S rRNA and the P site tRNA. Forms a bridge to the 30S subunit in the 70S ribosome.

Functionally, this is one of the proteins that bind and probably mediate the attachment of the 5S RNA into the large ribosomal subunit, where it forms part of the central protuberance. In the 70S ribosome it contacts protein S13 of the 30S subunit (bridge B1b), connecting the 2 subunits; this bridge is implicated in subunit movement. Contacts the P site tRNA; the 5S rRNA and some of its associated proteins might help stabilize positioning of ribosome-bound tRNAs. This is Large ribosomal subunit protein uL5 from Anaplasma phagocytophilum (strain HZ).